Here is a 113-residue protein sequence, read N- to C-terminus: N-alpha-acetyltransferase 38, NatC auxiliary subunit (113 aa).

A disordered region spans residues 1–29 (MAAVLEENGCSRQSSPGAGDSDAEAGDTA). The region spanning 28 to 106 (TARHKLESLL…IVSIQVELES (79 aa)) is the Sm domain.

It belongs to the snRNP Sm proteins family. In terms of assembly, component of the N-terminal acetyltransferase C (NatC) complex.

It localises to the cytoplasm. The protein resides in the nucleus. In terms of biological role, auxillary component of the N-terminal acetyltransferase C (NatC) complex which catalyzes acetylation of N-terminal methionine residues. N-terminal acetylation protects proteins from ubiquitination and degradation by the N-end rule pathway. The sequence is that of N-alpha-acetyltransferase 38, NatC auxiliary subunit (naa38) from Xenopus tropicalis (Western clawed frog).